The chain runs to 385 residues: GTP cyclohydrolase 1 type 2 homolog (385 aa).

Residues His-64, His-65, Asp-103, His-333, and Glu-337 each coordinate a divalent metal cation.

It belongs to the GTP cyclohydrolase I type 2/NIF3 family. In terms of assembly, homohexamer.

This chain is GTP cyclohydrolase 1 type 2 homolog, found in Mycobacterium leprae (strain TN).